We begin with the raw amino-acid sequence, 322 residues long: Putative DNA-directed RNA polymerase subunit alpha-like 2 (322 aa).

The interval 1–232 (MSNPNNGAEW…GLLSLVFQAE (232 aa)) is alpha N-terminal domain (alpha-NTD). The alpha C-terminal domain (alpha-CTD) stretch occupies residues 280 to 322 (EGPVTDEEGDSIDPTFTPVQKWDITMNSYQYSGETFQGLLSRF).

This sequence belongs to the RNA polymerase alpha chain family. As to quaternary structure, in plastids the minimal PEP RNA polymerase catalytic core is composed of four subunits: alpha, beta, beta', and beta''. When a (nuclear-encoded) sigma factor is associated with the core the holoenzyme is formed, which can initiate transcription.

The protein resides in the plastid. It is found in the chloroplast. It carries out the reaction RNA(n) + a ribonucleoside 5'-triphosphate = RNA(n+1) + diphosphate. DNA-dependent RNA polymerase catalyzes the transcription of DNA into RNA using the four ribonucleoside triphosphates as substrates. This Pelargonium hortorum (Common geranium) protein is Putative DNA-directed RNA polymerase subunit alpha-like 2 (rpoAL2-A).